A 345-amino-acid chain; its full sequence is S-adenosylmethionine:tRNA ribosyltransferase-isomerase (345 aa).

This sequence belongs to the QueA family. As to quaternary structure, monomer.

It is found in the cytoplasm. The enzyme catalyses 7-aminomethyl-7-carbaguanosine(34) in tRNA + S-adenosyl-L-methionine = epoxyqueuosine(34) in tRNA + adenine + L-methionine + 2 H(+). The protein operates within tRNA modification; tRNA-queuosine biosynthesis. Transfers and isomerizes the ribose moiety from AdoMet to the 7-aminomethyl group of 7-deazaguanine (preQ1-tRNA) to give epoxyqueuosine (oQ-tRNA). The protein is S-adenosylmethionine:tRNA ribosyltransferase-isomerase of Acidithiobacillus ferrooxidans (strain ATCC 53993 / BNL-5-31) (Leptospirillum ferrooxidans (ATCC 53993)).